The following is a 486-amino-acid chain: Elastin-binding protein EbpS (486 aa).

Over residues 1–40 (MSNNFKDDFEKNRQSIDTNSHQDHTEDVEKDQSELEHQDT) the composition is skewed to basic and acidic residues. A disordered region spans residues 1–314 (MSNNFKDDFE…NHDRDKERKK (314 aa)). At 2-204 (SNNFKDDFEK…ESKDHHSGKK (203 aa)) the chain is on the extracellular side. The tract at residues 14-34 (QSIDTNSHQDHTEDVEKDQSE) is elastin-binding. Residues 64–85 (TNHNKQVHNESQTSEDNVQNEA) are compositionally biased toward polar residues. Composition is skewed to basic and acidic residues over residues 103-118 (EPSH…EEYY), 126-160 (DKSH…KSEA), and 180-199 (SKDK…SKDH). Composition is skewed to low complexity over residues 204–225 (KGAA…MGVS) and 233–246 (DAQN…SNNS). Residues 205–225 (GAAIGAGTAGVAGAAGAMGVS) form a helical membrane-spanning segment. Residues 226–319 (KAKKHSNDAQ…KERKKGGMAK (94 aa)) lie on the Cytoplasmic side of the membrane. Residues 247–259 (TEDKVSQDKSKDH) show a composition bias toward basic and acidic residues. The span at 278 to 297 (GAASKSASAASKPHASNNAS) shows a compositional bias: low complexity. Residues 299–314 (NHDEHDNHDRDKERKK) show a composition bias toward basic and acidic residues. Residues 320–340 (VLLPLIAAVLIIGALAIFGGM) form a helical membrane-spanning segment. The Extracellular portion of the chain corresponds to 341 to 486 (ALNNHNNGTK…IRNGQQIVIP (146 aa)). A disordered region spans residues 351–440 (ENKIANTNKN…QRQGGGQRHT (90 aa)). The segment covering 361-398 (NADESKDKDTSKDASKDKSKSTDSDKSKEDQDKATKDE) has biased composition (basic and acidic residues). The span at 403-431 (QNNANQANNQAQNNQNQQQANQNQQQQQQ) shows a compositional bias: low complexity. The LysM domain occupies 437–485 (QRHTVNGQENLYRIAIQYYGSGSPENVEKIRRANGLSGNNIRNGQQIVI).

It localises to the cell membrane. In terms of biological role, promotes binding of soluble elastin peptides and tropoelastin to S.aureus cells although it is not able to promote bacterial adherence to immobilized elastin and, therefore, is not a microbial surface component recognizing adhesive matrix molecule (MSCRAMM). The sequence is that of Elastin-binding protein EbpS (ebpS) from Staphylococcus aureus (strain MSSA476).